The sequence spans 1182 residues: Phosphatidylinositol 3-kinase age-1 (1182 aa).

Positions 1-16 are enriched in polar residues; sequence MSMGRSPSTTFRSRTG. A disordered region spans residues 1–24; sequence MSMGRSPSTTFRSRTGSHGARDLI. The PI3K-ABD domain maps to 74 to 174; that stretch reads NEGVADIITM…FPMLFLYQPD (101 aa). The PI3K-RBD domain occupies 266 to 358; that stretch reads KRKAEINGVC…YRCPGFVVRR (93 aa). A C2 PI3K-type domain is found at 425–577; it reads LDANLMIRPV…SSYGGRVRMP (153 aa). In terms of domain architecture, PIK helical spans 601–788; sequence DDYESCIRDP…SLLMEAYLRG (188 aa). The region spanning 853 to 1168 is the PI3K/PI4K catalytic domain; that stretch reads IIDKAIVLGS…IYEEAFNGSW (316 aa). The G-loop stretch occupies residues 859-865; the sequence is VLGSAKR. The tract at residues 1028–1036 is catalytic loop; it reads GIKDRHSDN. Residues 1047–1073 are activation loop; that stretch reads HIDFGHILGHGKTKLGIQRDRQPFILT.

This sequence belongs to the PI3/PI4-kinase family.

It catalyses the reaction a 1,2-diacyl-sn-glycero-3-phospho-(1D-myo-inositol) + ATP = a 1,2-diacyl-sn-glycero-3-phospho-(1D-myo-inositol-3-phosphate) + ADP + H(+). Its function is as follows. Phosphatidylinositol 3-kinase homolog that regulates longevity and diapause. Promotes cell survival during embryonic development by recruiting akt-1/2 to the plasma membrane through the production of PtdIns(3,4,5)P3. Could function in the development or neuroendocrine signaling of the dauer pathway. Mediates susceptibility to enteropathogenic E.coli infection. May negatively regulate AYI interneuron neurite outgrowth. Plays a role in aversive olfactory learning when an odor is associated with food deprivation. Regulates this process by promoting the nuclear relocalization of egl-4 in AWC olfactory neurons after odor conditioning. The sequence is that of Phosphatidylinositol 3-kinase age-1 from Caenorhabditis elegans.